A 323-amino-acid polypeptide reads, in one-letter code: MAPFVPYHSSAGQATIVKFGGLLTTEFLEPPPGRCFLFRQTYRHTVEGPIPENLRKLINSPHKPKGPPPHFHQFQTEYFRVETGVLGIEVDGVLRRITPEDGEISVKAGSVHRFFIHPDSPESMTVYLSASDSGNDYQLDRIFFENWYGYWHDALLHDGGIDWIQFLAIQDGGDAYTPAPAWVPFRRQVGYWTCVIVGRWIGGLLGYKPFFREYTTDWDFAVAKMKGSVFQRHLVHEAFGAEKSWKQQTELEARVKPENAEFEQWTEDMSPTPLMLKPLAYEAGEFKGLQDQSANGVNGHATGVEAKKKQLGDMTRRRSGAQE.

The tract at residues 291–323 (DQSANGVNGHATGVEAKKKQLGDMTRRRSGAQE) is disordered. A compositionally biased stretch (basic and acidic residues) spans 305 to 316 (EAKKKQLGDMTR).

It belongs to the oxidoreductase OpS7 family.

The protein localises to the vacuole lumen. It is found in the cytoplasmic vesicle lumen. It functions in the pathway mycotoxin biosynthesis; patulin biosynthesis. Functionally, probable oxidoreductase; part of the gene cluster that mediates the biosynthesis of patulin, an acetate-derived tetraketide mycotoxin produced by several fungal species that shows antimicrobial properties against several bacteria. PatJ acts with patO in the vacuole to convert gentisyl alcohol to isoepoxydon. The pathway begins with the synthesis of 6-methylsalicylic acid by the polyketide synthase (PKS) patK via condensation of acetate and malonate units. The 6-methylsalicylic acid decarboxylase patG then catalyzes the decarboxylation of 6-methylsalicylic acid to yield m-cresol (also known as 3-methylphenol). These first reactions occur in the cytosol. The intermediate m-cresol is then transported into the endoplasmic reticulum where the cytochrome P450 monooxygenase patH converts it to m-hydroxybenzyl alcohol, which is further converted to gentisyl alcohol by the cytochrome P450 monooxygenase patI. The oxidoreductases patJ and patO further convert gentisyl alcohol to isoepoxydon in the vacuole. PatN catalyzes then the transformation of isoepoxydon into phyllostine. The cluster protein patF is responsible for the conversion from phyllostine to neopatulin whereas the alcohol dehydrogenase patD converts neopatulin to E-ascladiol. The steps between isoepoxydon and E-ascladiol occur in the cytosol, and E-ascladiol is probably secreted to the extracellular space by one of the cluster-specific transporters patC or patM. Finally, the secreted patulin synthase patE catalyzes the conversion of E-ascladiol to patulin. This Aspergillus clavatus (strain ATCC 1007 / CBS 513.65 / DSM 816 / NCTC 3887 / NRRL 1 / QM 1276 / 107) protein is Probable oxidoreductase patJ.